The primary structure comprises 218 residues: YlmG homolog protein 1-2, chloroplastic (218 aa).

The N-terminal 83 residues, Met1–Leu83, are a transit peptide targeting the chloroplast. 2 helical membrane-spanning segments follow: residues Leu133 to Val153 and Ile187 to Gly207.

This sequence belongs to the YggT family.

The protein resides in the plastid. It is found in the chloroplast thylakoid membrane. Functionally, not required for the biogenesis and accumulation of native cytochrome b6 in the thylakoid membrane. Not functionally involved in the pathway for covalent binding of the c-type heme to cytochrome b6. This chain is YlmG homolog protein 1-2, chloroplastic, found in Arabidopsis thaliana (Mouse-ear cress).